Here is a 589-residue protein sequence, read N- to C-terminus: MKTLTSQGIRTYGRLLQATKQYWPIFLIGVVGMIAVSLSDAGFTWLIKPIINRGFIARDLVFIRWLPFIIVLVFLFRGAANFLSTYFINRVARNIVMDFRRAIFSHLLRLPAEFYDRHSSGHLLSTVIYNVEQVAQASSDALIITLQASSLVVGLLVVMFLVSWKLTLFFLVITPLIAWVMRVCSARLRHLSTSVQKSVGEVTHIASEAIEAYKIVRLYGGQKYENEKFRHATKLNQQRELKVVVTNSVGTSLVQLLIAIPIAIVLFFATQPSFHVTAGSFASIVSAMIMMLRPVRRLTMVNSYIQKGIAAAESIFKLLDEDVEKDRGERHLVRARGAIEYQGVSFAYDNSKKTILSEISFSIEPGQMVAIVGRSGAGKSTLINLLPRFYDASTGVIKIDDINIKEFRLQELRNQFGLVSQHTTLFNDTILNNIAYGQAGSIDKRKIIEAARAAHAMEFIEQLPEGLDTVIGENGVRLSGGQRQRIAIARALFKNAPIHILDEATSSLDTHSERHIQAALDNLMDQCTTLVIAHRLSTIERADWIMVLEEGRLIEKGTHQQLLTLNGAYAELYRMQFAEKPAAMTALDE.

The next 5 helical transmembrane spans lie at 23–43 (WPIF…DAGF), 60–80 (LVFI…RGAA), 153–173 (VGLL…FLVI), 249–269 (VGTS…LFFA), and 272–292 (PSFH…IMML). In terms of domain architecture, ABC transmembrane type-1 spans 27–307 (LIGVVGMIAV…LTMVNSYIQK (281 aa)). Residues 339–575 (IEYQGVSFAY…NGAYAELYRM (237 aa)) enclose the ABC transporter domain. 373-380 (GRSGAGKS) contacts ATP.

This sequence belongs to the ABC transporter superfamily. Lipid exporter (TC 3.A.1.106) family. Homodimer.

The protein resides in the cell inner membrane. It catalyses the reaction ATP + H2O + lipid A-core oligosaccharideSide 1 = ADP + phosphate + lipid A-core oligosaccharideSide 2.. In terms of biological role, involved in lipopolysaccharide (LPS) biosynthesis. Translocates lipid A-core from the inner to the outer leaflet of the inner membrane. Transmembrane domains (TMD) form a pore in the inner membrane and the ATP-binding domain (NBD) is responsible for energy generation. In Coxiella burnetii (strain RSA 493 / Nine Mile phase I), this protein is ATP-dependent lipid A-core flippase.